A 463-amino-acid chain; its full sequence is Argininosuccinate lyase (463 aa).

Belongs to the lyase 1 family. Argininosuccinate lyase subfamily.

It is found in the cytoplasm. The catalysed reaction is 2-(N(omega)-L-arginino)succinate = fumarate + L-arginine. It functions in the pathway amino-acid biosynthesis; L-arginine biosynthesis; L-arginine from L-ornithine and carbamoyl phosphate: step 3/3. This chain is Argininosuccinate lyase, found in Prochlorococcus marinus (strain NATL2A).